We begin with the raw amino-acid sequence, 341 residues long: MATIKDVAKHAGVSTTTVSHVINKTRFVAENTKAAVWAAIKELHYSPSAVARSLKVNHTKSIGLLATSSEAPYFAEVIEAVENSCYSKGYTLILCNSHNNLDKQKAYLAMLAQKRVDGLLVMCSEYPEQLLGMLEDYRNIPMVVMDWGTARGDFTDSIIDNAFEGGYLAGRYLIERGHRDIGAIPGQLSRNTGGGRHQGFLKALEEANITLREEWVVQGDFEPESGYKAMHQILTQKHRPTAVFCGGDIMAMGAICAADELGLRVPQDISVIGYDNVRNARYFSPALTTIHQPKERLGETAFAMLLDRIVSKREDPQTIEVHPKLVERRSVADGPFRDYRR.

Positions 2-56 (ATIKDVAKHAGVSTTTVSHVINKTRFVAENTKAAVWAAIKELHYSPSAVARSLKV) constitute an HTH lacI-type domain. Positions 4 to 23 (IKDVAKHAGVSTTTVSHVIN) form a DNA-binding region, H-T-H motif. The DNA-binding element occupies 48–56 (SAVARSLKV). Hypoxanthine is bound by residues tyrosine 73, arginine 190, threonine 192, phenylalanine 221, and aspartate 275.

Homodimer.

The protein operates within purine metabolism; purine nucleotide biosynthesis [regulation]. Its function is as follows. Is the main repressor of the genes involved in the de novo synthesis of purine nucleotides, regulating purB, purC, purEK, purF, purHD, purL, purMN and guaBA expression. PurR is allosterically activated to bind its cognate DNA by binding the purine corepressors, hypoxanthine or guanine, thereby effecting transcription repression. In Yersinia enterocolitica serotype O:8 / biotype 1B (strain NCTC 13174 / 8081), this protein is HTH-type transcriptional repressor PurR.